Consider the following 241-residue polypeptide: Orotidine 5'-phosphate decarboxylase (241 aa).

Substrate is bound by residues D15, K37, 64–73, T126, R187, Q196, G216, and R217; that span reads DLKYHDIPNT. K66 functions as the Proton donor in the catalytic mechanism.

Belongs to the OMP decarboxylase family. Type 1 subfamily. Homodimer.

It catalyses the reaction orotidine 5'-phosphate + H(+) = UMP + CO2. It functions in the pathway pyrimidine metabolism; UMP biosynthesis via de novo pathway; UMP from orotate: step 2/2. Catalyzes the decarboxylation of orotidine 5'-monophosphate (OMP) to uridine 5'-monophosphate (UMP). The chain is Orotidine 5'-phosphate decarboxylase from Geotalea uraniireducens (strain Rf4) (Geobacter uraniireducens).